Consider the following 372-residue polypeptide: Mannan endo-1,4-beta-mannosidase 8 (372 aa).

Substrate-binding residues include Trp-57 and Asn-172. The active-site Proton donor is Glu-173. Tyr-253 is a binding site for substrate. The active-site Nucleophile is Glu-293. Trp-335 contacts substrate.

It belongs to the glycosyl hydrolase 5 (cellulase A) family. As to expression, expressed in stems and leaves and seeds.

It catalyses the reaction Random hydrolysis of (1-&gt;4)-beta-D-mannosidic linkages in mannans, galactomannans and glucomannans.. This Oryza sativa subsp. japonica (Rice) protein is Mannan endo-1,4-beta-mannosidase 8 (MAN8).